The chain runs to 280 residues: Phosphatidylglycerol--prolipoprotein diacylglyceryl transferase (280 aa).

Helical transmembrane passes span 59-79 (FLTW…ILFY) and 97-117 (GGMS…LFTW). A 1,2-diacyl-sn-glycero-3-phospho-(1'-sn-glycerol) is bound at residue arginine 142. 2 helical membrane-spanning segments follow: residues 207-227 (GFLA…CECF) and 233-253 (FIGF…PMAI).

This sequence belongs to the Lgt family.

It localises to the cell inner membrane. The enzyme catalyses L-cysteinyl-[prolipoprotein] + a 1,2-diacyl-sn-glycero-3-phospho-(1'-sn-glycerol) = an S-1,2-diacyl-sn-glyceryl-L-cysteinyl-[prolipoprotein] + sn-glycerol 1-phosphate + H(+). It participates in protein modification; lipoprotein biosynthesis (diacylglyceryl transfer). Catalyzes the transfer of the diacylglyceryl group from phosphatidylglycerol to the sulfhydryl group of the N-terminal cysteine of a prolipoprotein, the first step in the formation of mature lipoproteins. This Gluconacetobacter diazotrophicus (strain ATCC 49037 / DSM 5601 / CCUG 37298 / CIP 103539 / LMG 7603 / PAl5) protein is Phosphatidylglycerol--prolipoprotein diacylglyceryl transferase.